Consider the following 5161-residue polypeptide: Nonribosomal peptide synthetase TES (5161 aa).

Residues 37-436 (EEQAIARPNA…GRKDSQTKVR (400 aa)) form an adenylation 1 region. Residues 569–645 (QPETEKEQIL…KLTSAAIPSV (77 aa)) enclose the Carrier 1 domain. O-(pantetheine 4'-phosphoryl)serine is present on S606. Residues 659–1098 (GHVAQSFAQG…LLCDVELSKL (440 aa)) are condensation 1. Positions 1122 to 1522 (RQQTSLCPSR…GRMDGQVKIR (401 aa)) are adenylation 2. The tract at residues 1630 to 1742 (MNEWLDDTID…YLFKTTQQLL (113 aa)) is methyltransferase (M) domain 1. Residues 2068–2141 (TRAESKIQQL…QLAAVAQEHV (74 aa)) form the Carrier 2 domain. S2102 carries the O-(pantetheine 4'-phosphoryl)serine modification. Residues 2179–2593 (EDIYPCSPLQ…MLTQDDEQQL (415 aa)) form a condensation 2 region. The segment at 2614–3010 (DQAKSRPEAD…GRKDGQVKVR (397 aa)) is adenylation 3. The 77-residue stretch at 3139-3215 (KPETKHEMAL…RLANRLVDPP (77 aa)) folds into the Carrier 3 domain. S3176 carries the O-(pantetheine 4'-phosphoryl)serine modification. Residues 3232–3668 (LQSFAQGRLW…VVPLMTVEAH (437 aa)) are condensation 3. The adenylation 4 stretch occupies residues 3694-4098 (FRQQAAMQPS…GRIDGQVKIR (405 aa)). The segment at 4203–4329 (EMKEWLEETI…KVDGVKTLFF (127 aa)) is methyltransferase (M) domain 2. In terms of domain architecture, Carrier 4 spans 4643-4725 (RELSTAELKV…QFSQHEGEQK (83 aa)). Position 4680 is an O-(pantetheine 4'-phosphoryl)serine (S4680). A condensation 4 region spans residues 4785-5093 (FFLNLGTRVD…HQNLNEHPEF (309 aa)).

The protein belongs to the NRP synthetase family.

It functions in the pathway phytotoxin biosynthesis. Its function is as follows. Nonribosomal peptide synthetase; part of the gene cluster that mediates the biosynthesis of the phytotoxin tentoxin, an inhibitor the F1-ATPase activity of chloroplasts, resulting in chlorosis in sensitive plants. Tentoxin is a cyclic tetrapeptide that consists of four amino acid residues: glycine (Gly), alanine (Ala), leucine (Leu), and dehydrophenylalanine (DPhe). In addition, both the Ala and DPhe residues are N-methylated. The nonribosomal peptide synthetase TES assembles tentoxin from the four substrate amino acids. The adenylation domains of each of the 4 modules are responsible for the activation of Gly, Ala, Leu and DPhe, respectively. In addition, the N-methyltransferase domains in the second and fourth modules of TES could be responsible for N-methylation of Ala and DPhe residues. Finally, the condensation domain located in the termination module probably catalyzes the formation of the intramolecular macrocyclization and then the release of tentoxin. The cytochrome P450 monooxygenase TES1 is predicted to be involved in the formation of DPhe. The chain is Nonribosomal peptide synthetase TES from Alternaria alternata (Alternaria rot fungus).